The chain runs to 305 residues: tRNA pseudouridine synthase B (305 aa).

D39 serves as the catalytic Nucleophile.

It belongs to the pseudouridine synthase TruB family. Type 1 subfamily.

The enzyme catalyses uridine(55) in tRNA = pseudouridine(55) in tRNA. Functionally, responsible for synthesis of pseudouridine from uracil-55 in the psi GC loop of transfer RNAs. This is tRNA pseudouridine synthase B from Staphylococcus aureus (strain Mu50 / ATCC 700699).